A 224-amino-acid chain; its full sequence is ATP-dependent dethiobiotin synthetase BioD (224 aa).

Residue 14–19 (GIGKTV) participates in ATP binding. Threonine 18 provides a ligand contact to Mg(2+). Lysine 39 is a catalytic residue. Serine 43 is a binding site for substrate. ATP contacts are provided by residues aspartate 56, 117–120 (EGVG), and 177–178 (NE). Positions 56 and 117 each coordinate Mg(2+).

This sequence belongs to the dethiobiotin synthetase family. As to quaternary structure, homodimer. The cofactor is Mg(2+).

It is found in the cytoplasm. It carries out the reaction (7R,8S)-7,8-diammoniononanoate + CO2 + ATP = (4R,5S)-dethiobiotin + ADP + phosphate + 3 H(+). It functions in the pathway cofactor biosynthesis; biotin biosynthesis; biotin from 7,8-diaminononanoate: step 1/2. Catalyzes a mechanistically unusual reaction, the ATP-dependent insertion of CO2 between the N7 and N8 nitrogen atoms of 7,8-diaminopelargonic acid (DAPA, also called 7,8-diammoniononanoate) to form a ureido ring. In Xanthomonas campestris pv. campestris (strain 8004), this protein is ATP-dependent dethiobiotin synthetase BioD.